We begin with the raw amino-acid sequence, 221 residues long: GTP cyclohydrolase 1 (221 aa).

Zn(2+)-binding residues include Cys-109, His-112, and Cys-180.

This sequence belongs to the GTP cyclohydrolase I family. As to quaternary structure, toroid-shaped homodecamer, composed of two pentamers of five dimers.

The catalysed reaction is GTP + H2O = 7,8-dihydroneopterin 3'-triphosphate + formate + H(+). It participates in cofactor biosynthesis; 7,8-dihydroneopterin triphosphate biosynthesis; 7,8-dihydroneopterin triphosphate from GTP: step 1/1. The sequence is that of GTP cyclohydrolase 1 from Blochmanniella pennsylvanica (strain BPEN).